Consider the following 369-residue polypeptide: UDP-N-acetylglucosamine--N-acetylmuramyl-(pentapeptide) pyrophosphoryl-undecaprenol N-acetylglucosamine transferase (369 aa).

Residues 15-17 (TGG), asparagine 126, arginine 169, serine 197, and glutamine 299 each bind UDP-N-acetyl-alpha-D-glucosamine.

This sequence belongs to the glycosyltransferase 28 family. MurG subfamily.

It localises to the cell inner membrane. The enzyme catalyses di-trans,octa-cis-undecaprenyl diphospho-N-acetyl-alpha-D-muramoyl-L-alanyl-D-glutamyl-meso-2,6-diaminopimeloyl-D-alanyl-D-alanine + UDP-N-acetyl-alpha-D-glucosamine = di-trans,octa-cis-undecaprenyl diphospho-[N-acetyl-alpha-D-glucosaminyl-(1-&gt;4)]-N-acetyl-alpha-D-muramoyl-L-alanyl-D-glutamyl-meso-2,6-diaminopimeloyl-D-alanyl-D-alanine + UDP + H(+). It functions in the pathway cell wall biogenesis; peptidoglycan biosynthesis. In terms of biological role, cell wall formation. Catalyzes the transfer of a GlcNAc subunit on undecaprenyl-pyrophosphoryl-MurNAc-pentapeptide (lipid intermediate I) to form undecaprenyl-pyrophosphoryl-MurNAc-(pentapeptide)GlcNAc (lipid intermediate II). This is UDP-N-acetylglucosamine--N-acetylmuramyl-(pentapeptide) pyrophosphoryl-undecaprenol N-acetylglucosamine transferase from Methylorubrum extorquens (strain CM4 / NCIMB 13688) (Methylobacterium extorquens).